A 129-amino-acid polypeptide reads, in one-letter code: MKYFVVALALVAAFVCIAESKPAESEHELAEVEEENELADLEDAVWLEHLADLSDLEEARGFFGNTWKKIKGKSDKIMLKKAVKIMVKKEGISKEEAQAKVDAMSKKQIRLYLLKYYGKKALQKASEKL.

The N-terminal stretch at 1–20 (MKYFVVALALVAAFVCIAES) is a signal peptide. The propeptide occupies 21–60 (KPAESEHELAEVEEENELADLEDAVWLEHLADLSDLEEAR). The short motif at 57 to 60 (EEAR) is the Processing quadruplet motif element.

Cleavage of the propeptide depends on the processing quadruplet motif (XXXR, with at least one of X being E). In terms of tissue distribution, expressed by the venom gland.

It localises to the secreted. Its function is as follows. Insecticidal, cytolytic and antimicrobial peptide. Forms voltage-dependent, ion-permeable channels in membranes. At high concentration causes cell membrane lysis. The chain is M-zodatoxin-Lt8e (cit 1-5) from Lachesana tarabaevi (Spider).